Consider the following 960-residue polypeptide: Dynamin-like GTPase OPA1, mitochondrial (960 aa).

The N-terminal 87 residues, 1 to 87 (MWRAGRAALA…TKYGYQPRRN (87 aa)), are a transit peptide targeting the mitochondrion. Over 88 to 96 (FWPARLAAR) the chain is Mitochondrial matrix. The chain crosses the membrane as a helical span at residues 97 to 113 (LLKLRYIILGSAVGGGY). The Mitochondrial intermembrane segment spans residues 114 to 770 (TAKKTFDEWK…NAIENMIGPD (657 aa)). Positions 210-254 (SDKEKIDQLQEELLHTQLKYQRILERLEKENKELRKLVLQKDDKG) form a coiled coil. The LQQQIQ motif signature appears at 217–222 (QLQEEL). Lys228 is subject to N6-acetyllysine. An LQQQIQ motif motif is present at residues 234 to 239 (ERLEKE). In terms of domain architecture, Dynamin-type G spans 285–561 (QDHLPRVVVV…FWKMVRESVE (277 aa)). Residues 295–302 (GDQSAGKT) are G1 motif. Residues Ser298, Gly300, Lys301, Thr302, Ser303, and Gly317 each coordinate GTP. Mg(2+) is bound at residue Thr302. A G2 motif region spans residues 321-324 (MMTR). Thr323 and Asp398 together coordinate Mg(2+). Residues 398-401 (DLPG) form a G3 motif region. The tract at residues 467 to 470 (TKVD) is G4 motif. Residues Lys468, Asp470, and Thr503 each contribute to the GTP site. Residues 501–504 (VVTG) form a G5 motif region. Stalk region regions lie at residues 589 to 836 (DRNE…IKDT) and 874 to 928 (CNDV…VKLL). Residues 736 to 856 (SDKQQWDAAI…KTALNHCNLC (121 aa)) form a paddle region region. The stretch at 771-781 (WKKRWIYWKNR) is an intramembrane region. At 782 to 960 (TQEQCVHNET…AFIEALHQEK (179 aa)) the chain is on the mitochondrial intermembrane side. Cys856 and Cys874 form a disulfide bridge. Residues 895–960 (RQQLTNTEVR…AFIEALHQEK (66 aa)) are a coiled coil.

The protein belongs to the TRAFAC class dynamin-like GTPase superfamily. Dynamin/Fzo/YdjA family. In terms of assembly, oligomeric complex consisting of membrane-bound and soluble forms of OPA1. Interacts with RCC1L; RCC1L acts as a guanine nucleotide exchange factor (GEF) for OPA1 by exchanging bound GDP for free GTP. Interacts with CHCHD3 and IMMT; these interactions occur preferentially with soluble OPA1 forms. Interacts with PRELID1. Cleaved by OMA1 or YME1L downstream of the transmembrane region in response to different signals to generate soluble forms. Cleaved by OMA1 at position S1 following stress conditions, generating the short soluble form (Dynamin-like GTPase OPA1, short form; S-OPA1). AFG3L2 is involved in the regulation of OMA1-dependent processing of OPA1. PARL-dependent proteolytic processing releases an antiapoptotic soluble form not required for mitochondrial fusion. Post-translationally, cleavage at position S2 by YME1L is required to mediate oxidative phosphorylation (OXPHOS)-induced mitochondrial fusion. Cleavage occurs in the sequence motif Leu-Gln-Gln-Gln-Ile-Gln (LQQQIQ). In terms of tissue distribution, expressed in brain as well as retinal ganglion, starbust amacrine and horizontal cells of the retina. Absent from nerve fibers and photoreceptor cells of the retina.

It is found in the mitochondrion inner membrane. The protein resides in the mitochondrion intermembrane space. It catalyses the reaction GTP + H2O = GDP + phosphate + H(+). With respect to regulation, activated by guanine nucleotide exchange factor RCC1L. Its function is as follows. Dynamin-related GTPase that is essential for normal mitochondrial morphology by mediating fusion of the mitochondrial inner membranes, regulating cristae morphology and maintaining respiratory chain function. Exists in two forms: the transmembrane, long form (Dynamin-like GTPase OPA1, long form; L-OPA1), which is tethered to the inner mitochondrial membrane, and the short soluble form (Dynamin-like GTPase OPA1, short form; S-OPA1), which results from proteolytic cleavage and localizes in the intermembrane space. Both forms (L-OPA1 and S-OPA1) cooperate to catalyze the fusion of the mitochondrial inner membrane. The equilibrium between L-OPA1 and S-OPA1 is essential: excess levels of S-OPA1, produced by cleavage by OMA1 following loss of mitochondrial membrane potential, lead to an impaired equilibrium between L-OPA1 and S-OPA1, inhibiting mitochondrial fusion. The balance between L-OPA1 and S-OPA1 also influences cristae shape and morphology. Involved in remodeling cristae and the release of cytochrome c during apoptosis. Proteolytic processing by PARL in response to intrinsic apoptotic signals may lead to disassembly of OPA1 oligomers and release of the caspase activator cytochrome C (CYCS) into the mitochondrial intermembrane space. Acts as a regulator of T-helper Th17 cells, which are characterized by cells with fused mitochondria with tight cristae, by mediating mitochondrial membrane remodeling: OPA1 is required for interleukin-17 (IL-17) production. Its role in mitochondrial morphology is required for mitochondrial genome maintenance. Constitutes the transmembrane long form (L-OPA1) that plays a central role in mitochondrial inner membrane fusion and cristae morphology. L-OPA1 and the soluble short form (S-OPA1) form higher-order helical assemblies that coordinate the fusion of mitochondrial inner membranes. Inner membrane-anchored L-OPA1 molecules initiate membrane remodeling by recruiting soluble S-OPA1 to rapidly polymerize into a flexible cylindrical scaffold encaging the mitochondrial inner membrane. Once at the membrane surface, the formation of S-OPA1 helices induce bilayer curvature. OPA1 dimerization through the paddle region, which inserts into cardiolipin-containing membrane, promotes GTP hydrolysis and the helical assembly of a flexible OPA1 lattice on the membrane, which drives membrane curvature and mitochondrial fusion. Plays a role in the maintenance and remodeling of mitochondrial cristae, some invaginations of the mitochondrial inner membrane that provide an increase in the surface area. Probably acts by forming helical filaments at the inside of inner membrane tubes with the shape and dimensions of crista junctions. The equilibrium between L-OPA1 and S-OPA1 influences cristae shape and morphology: increased L-OPA1 levels promote cristae stacking and elongated mitochondria, while increased S-OPA1 levels correlated with irregular cristae packing and round mitochondria shape. In terms of biological role, constitutes the soluble short form (S-OPA1) generated by cleavage by OMA1, which plays a central role in mitochondrial inner membrane fusion and cristae morphology. The transmembrane long form (L-OPA1) and the S-OPA1 form higher-order helical assemblies that coordinate the fusion of mitochondrial inner membranes. Inner membrane-anchored L-OPA1 molecules initiate membrane remodeling by recruiting soluble S-OPA1 to rapidly polymerize into a flexible cylindrical scaffold encaging the mitochondrial inner membrane. Once at the membrane surface, the formation of S-OPA1 helices induce bilayer curvature. OPA1 dimerization through the paddle region, which inserts into cardiolipin-containing membrane, promotes GTP hydrolysis and the helical assembly of a flexible OPA1 lattice on the membrane, which drives membrane curvature and mitochondrial fusion. Excess levels of S-OPA1 produced by cleavage by OMA1 following stress conditions that induce loss of mitochondrial membrane potential, lead to an impaired equilibrium between L-OPA1 and S-OPA1, thereby inhibiting mitochondrial fusion. Involved in mitochondrial safeguard in response to transient mitochondrial membrane depolarization by mediating flickering: cleavage by OMA1 leads to excess production of S-OPA1, preventing mitochondrial hyperfusion. Plays a role in the maintenance and remodeling of mitochondrial cristae, some invaginations of the mitochondrial inner membrane that provide an increase in the surface area. Probably acts by forming helical filaments at the inside of inner membrane tubes with the shape and dimensions of crista junctions. The equilibrium between L-OPA1 and S-OPA1 influences cristae shape and morphology: increased L-OPA1 levels promote cristae stacking and elongated mitochondria, while increased S-OPA1 levels correlated with irregular cristae packing and round mitochondria shape. Functionally, isoforms that contain the alternative exon 4b are required for mitochondrial genome maintenance, possibly by anchoring the mitochondrial nucleoids to the inner mitochondrial membrane. The sequence is that of Dynamin-like GTPase OPA1, mitochondrial from Rattus norvegicus (Rat).